We begin with the raw amino-acid sequence, 147 residues long: METLTAISRWLAKQHVVTWCVQQEGELWCANAFYLFDVQKVAFYILTEEKTRHAQMRGPQAAVAGTVNGQPKTVALIRGVQFKGEIRRLEGEESDLARKAYNRRFPVARMLSAPVWEIRPDEIKFTDNTLGFGKKMIWLRGSGTEQA.

The protein belongs to the UPF0306 family.

The chain is UPF0306 protein YhbP from Escherichia coli O157:H7 (strain EC4115 / EHEC).